The primary structure comprises 861 residues: ToMV resistance protein Tm-2(2) (861 aa).

The stretch at 63–83 (VKNLLKDIQELAGDVEDLLDD) forms a coiled coil. The NB-ARC domain occupies 162–388 (DDFNMLQAKL…LESMGHKVQD (227 aa)). Position 185–192 (185–192 (GMPGLGKT)) interacts with ATP. LRR repeat units lie at residues 225-248 (LDIAKQIGLTEQKMKENLEDNLRS), 305-327 (LHALQPLESEKSFELFTKKIFNF), 388-411 (DGCAKVLALSYNDLPIASRPCFLY), 449-472 (LAEDVLNDLVSRNLIQLAKRTYNG), 510-536 (VARLRRITFYSDNVMIEFFRSNPKLEK), 585-608 (MTCLRYLRLEGNICGKLPNSIVKL), 609-631 (TRLETIDIDRRSLIQPPSGVWES), 652-680 (ISSFYPNIYSLHPNNLQTLMWIPDKFFEP), 689-710 (LRKLGILGVSNSTVKMLSIFSP), 712-735 (LKALEVLKLSFSSDPSEQIKLSSY), 736-758 (PHIAKLHLNVNRTMALNSQSFPP), 784-810 (LRKLKMFICKYNEEKMDLSGEANGYSF), and 811-835 (PQLEVLHIHSPNGLSEVTCTDDVSM).

It belongs to the disease resistance NB-LRR family. As to quaternary structure, (Microbial infection) Interacts with tobamoviruses mouvement protein (e.g. tobacco mosaic virus (TMV) MP, AC P03583) at the plasma membrane; this interaction triggers defense responses leading to programmed cell death. In terms of assembly, binds to HSP90 proteins (e.g. HSP90-1 and Nicotiana benthamiana HSP90-1); this interaction seems required for defense responses toward tobamoviruses.

It localises to the cell membrane. Functionally, inhibitor of viral mouvements which confers resistance to some tobamoviruses including tomato mosaic virus (ToMV) (e.g. strains L, B7 and ToMV1-2) and tobacco mosaic virus (TMV), but not to resistance-breaking isolates (e.g. LIIA and ToMV2(2)) ToMV and tomato brown rugose fruit virus (ToBRFV). Elicits a hypersensitive reaction in response to avirulent (Avr) movement proteins from resistance inducing tobamoviruses (e.g. ToMV and TMV) strains, thus leading to programmed cell death; this local extreme resistance requires rbcS. The sequence is that of ToMV resistance protein Tm-2(2) from Solanum lycopersicum (Tomato).